Consider the following 209-residue polypeptide: Uracil phosphoribosyltransferase (209 aa).

Residues Arg79, Arg104, and 131 to 139 (DPMLATGNS) contribute to the 5-phospho-alpha-D-ribose 1-diphosphate site. Residues Ile194 and 199–201 (GDA) each bind uracil. Asp200 is a 5-phospho-alpha-D-ribose 1-diphosphate binding site.

The protein belongs to the UPRTase family. Mg(2+) is required as a cofactor.

The enzyme catalyses UMP + diphosphate = 5-phospho-alpha-D-ribose 1-diphosphate + uracil. Its pathway is pyrimidine metabolism; UMP biosynthesis via salvage pathway; UMP from uracil: step 1/1. Allosterically activated by GTP. Its function is as follows. Catalyzes the conversion of uracil and 5-phospho-alpha-D-ribose 1-diphosphate (PRPP) to UMP and diphosphate. This chain is Uracil phosphoribosyltransferase, found in Polaromonas naphthalenivorans (strain CJ2).